Consider the following 225-residue polypeptide: UPF0758 protein SEQ_1136 (225 aa).

The 123-residue stretch at 102 to 224 (PVLSSAQVAE…YYSFREKSDL (123 aa)) folds into the MPN domain. Residues His173, His175, and Asp186 each coordinate Zn(2+). The JAMM motif signature appears at 173 to 186 (HNHPSGLTKPSAND).

Belongs to the UPF0758 family.

This chain is UPF0758 protein SEQ_1136, found in Streptococcus equi subsp. equi (strain 4047).